The chain runs to 394 residues: MRPPSRCPGMRHNDGVSDIVRVLLLGSTGSIGTQALEVIAANPDKFEVVGLAARGGNPALLAEQMAATGTRNVAVADPAAGAALDIKLAGPHAVTELVRRTEADVVLNALVGSLGLEPTLATLTAGTRLALANKESLVAGGSLVTRAAAPGQIVPVDSEHSALAQCLRGGRADEVDRLVLTASGGPFRGWTAQMLESVNPEAAKAHPTWSMGLMNTLNSASLVNKGLELIETHLLFGIPYDRIDVTVHPQSIVHSMVTFVDGSTLAQASPPDMKLPIALALGWPDRVPGAAAACDFSTASTWTFEPVDTEVFPAVELARQAGQAGGSVTAVYNAANEVAVQAFLDGRIRFPEIVRTVARAVEAADRWRAEPETVEDVLAADRWARGRAAELVGA.

Positions 28, 29, 30, 31, 57, and 133 each coordinate NADPH. Lysine 134 provides a ligand contact to 1-deoxy-D-xylulose 5-phosphate. Glutamate 135 contributes to the NADPH binding site. Aspartate 157 contributes to the Mn(2+) binding site. Serine 158, glutamate 159, serine 183, and histidine 206 together coordinate 1-deoxy-D-xylulose 5-phosphate. Residue glutamate 159 coordinates Mn(2+). Glycine 212 is an NADPH binding site. Positions 219, 224, 225, and 228 each coordinate 1-deoxy-D-xylulose 5-phosphate. Glutamate 228 provides a ligand contact to Mn(2+).

This sequence belongs to the DXR family. It depends on Mg(2+) as a cofactor. Mn(2+) is required as a cofactor.

It carries out the reaction 2-C-methyl-D-erythritol 4-phosphate + NADP(+) = 1-deoxy-D-xylulose 5-phosphate + NADPH + H(+). It participates in isoprenoid biosynthesis; isopentenyl diphosphate biosynthesis via DXP pathway; isopentenyl diphosphate from 1-deoxy-D-xylulose 5-phosphate: step 1/6. Functionally, catalyzes the NADPH-dependent rearrangement and reduction of 1-deoxy-D-xylulose-5-phosphate (DXP) to 2-C-methyl-D-erythritol 4-phosphate (MEP). This chain is 1-deoxy-D-xylulose 5-phosphate reductoisomerase, found in Nocardia farcinica (strain IFM 10152).